Reading from the N-terminus, the 237-residue chain is Lectin (237 aa).

Mn(2+)-binding residues include Glu8 and Asp10. Positions 10, 12, 14, and 19 each coordinate Ca(2+). Residues Tyr12 and Asn14 each contribute to the a carbohydrate site. Mn(2+)-binding residues include Asp19 and His24. An a carbohydrate-binding site is contributed by 98–100; that stretch reads GLY. Asp208 contributes to the Ca(2+) binding site. Gly227 and Arg228 together coordinate a carbohydrate.

This sequence belongs to the leguminous lectin family. Homotetramer; dimer of dimers. Post-translationally, concanavalin A-like lectins of the Diocleinae subtribe undergo proteolytic processing referred to as circular permutation. The propeptide is split into an N-terminal and a C-terminal part, the gamma and beta chain, respectively. These are then religated in beta-gamma order to form the mature alpha chain. The beta and gamma chains can often be detected in cell extracts. Residues 1-118 of the mature chain, as displayed here, probably constitute the beta chain in the propeptide, residues 119-237 the gamma chain.

Its function is as follows. D-mannose/D-glucose-binding lectin with hemagglutinating activity towards rabbit and human erythrocytes. In rats, induces dose-dependent paw edema. Has low cytotoxicity against Artemisia sp. This chain is Lectin, found in Macropsychanthus comosus (Sea purse).